The sequence spans 474 residues: MLYTFDQVSKDVVKKLQGKDLRPVRCLSDATKFRQFDILQKTPQSLFFKSEDTPVGYSLLQILEPNFPVPETEVSAPMPLKHITSQKWKADVDVKATIADGGASAEFVQSCGYDIEVQSRSIPDSKLESLQNRQGPWGKLLDKKLSFVTDCQMGRNNLYVVTEVFEVTKDTVVQGSSSIDLSGKALVSQLVKGEAQGQWQRETTDLVPIPKGAVLAYKKKQLVIENNTCAILLSANAKKKTFPGIFNFGMSSRSQTMEIVNSSWIDYIPPIGRIEEPVHLDFKYLEKEVFLRKEQLAMLSKDVQDVVFSNLLPMLSDSDVLFDLINMLELDQLGHMDGPAGLILDELRKNSSTPWIDLKGLILYLLQALMVLSDTQLDLLAQSMEMRILLQQRELVRSILEPNFKYPWNIPFTLQPQLLAPLQGEGLAITYELLKGCGLKMEPNSPRSTWDLEAKMPLSALYGILSCLQQLVEA.

The tract at residues 1-237 is triggers pyroptosis; the sequence is MLYTFDQVSK…TCAILLSANA (237 aa).

Belongs to the gasdermin family. In terms of assembly, homooligomer; homooligomeric ring-shaped pore complex containing 27-28 subunits when inserted in the membrane. Post-translationally, cleavage by CASP8 relieves autoinhibition by releasing the N-terminal moiety (Gasdermin-C, N-terminal) that initiates pyroptosis. In terms of processing, palmitoylated.

The protein resides in the cytoplasm. It is found in the cytosol. The protein localises to the cell membrane. With respect to regulation, the full-length protein before cleavage is inactive: intramolecular interactions between N- and C-terminal domains mediate autoinhibition in the absence of activation signal. The intrinsic pyroptosis-inducing activity is carried by the released N-terminal moiety (Gasdermin-C, N-terminal) following cleavage by caspase CASP8. Functionally, this form constitutes the precursor of the pore-forming protein: upon cleavage, the released N-terminal moiety (Gasdermin-C, N-terminal) binds to membranes and forms pores, triggering pyroptosis. In terms of biological role, pore-forming protein that causes membrane permeabilization and pyroptosis. Produced by the cleavage of gasdermin-C by caspase CASP8 in response to death signals. After cleavage, moves to the plasma membrane where it strongly binds to membrane inner leaflet lipids. Homooligomerizes within the membrane and forms pores of 10-15 nanometers (nm) of inner diameter, triggering pyroptosis. This Rattus norvegicus (Rat) protein is Gasdermin-C.